The chain runs to 206 residues: LexA repressor (206 aa).

The H-T-H motif DNA-binding region spans 28-48; it reads VREIGEAVGLASSSTVHGHLA. Catalysis depends on for autocatalytic cleavage activity residues Ser-128 and Lys-166.

This sequence belongs to the peptidase S24 family. Homodimer.

The catalysed reaction is Hydrolysis of Ala-|-Gly bond in repressor LexA.. In terms of biological role, represses a number of genes involved in the response to DNA damage (SOS response), including recA and lexA. In the presence of single-stranded DNA, RecA interacts with LexA causing an autocatalytic cleavage which disrupts the DNA-binding part of LexA, leading to derepression of the SOS regulon and eventually DNA repair. The polypeptide is LexA repressor (Bacillus pumilus (strain SAFR-032)).